Here is a 339-residue protein sequence, read N- to C-terminus: Leucine-rich repeat-containing protein 75A (339 aa).

Residues 1–25 (MGTRQTKGSLAERASPGAAPGPRRE) form a disordered region. The segment covering 11-21 (AERASPGAAPG) has biased composition (low complexity). 2 LRR repeats span residues 203 to 216 (VDSVELGFTGLTDD) and 228 to 241 (LPRLTTLALNGNRL). Positions 294–339 (LPTILELGEGPGTGEEAREGTDQQDPIGSPVTPARGQESTECVIQT) are disordered. At S322 the chain carries Phosphoserine. Phosphothreonine is present on T325. The segment covering 330–339 (QESTECVIQT) has biased composition (polar residues).

It belongs to the LRRC75 family.

The polypeptide is Leucine-rich repeat-containing protein 75A (Lrrc75a) (Mus musculus (Mouse)).